A 366-amino-acid polypeptide reads, in one-letter code: Protein sigma-NS (366 aa).

Residues 1–11 (MASSLRAAISK) are important for ssRNA-binding and formation of complexes.

Belongs to the orthoreovirus sigma-NS protein family. In terms of assembly, homooligomer; in presence of RNA. Interacts with protein mu-NS; this interaction allows the localization of sigma-NS to the viral factories. Interacts with host G3BP1 (via C-terminus); this interaction induces the relocalization of G3BP1 and other SG proteins to the viral factories periphery.

The protein localises to the host cytoplasm. Protein that binds to ssRNA and participates with protein mu-NS in forming the matrix of viral factories, which are large inclusions in the host cytoplasm where replication intermediates are assembled and viral RNA replication takes place. Plays a role in the inhibition of the integrated stress response (ISR) to escape from host cell translational shutoff. Participates in the disruption of stress granules (SG) through its association with host G3BP1 and mu-NS. The chain is Protein sigma-NS (S3) from Mammalia (T1L).